Reading from the N-terminus, the 275-residue chain is 3-methyl-2-oxobutanoate hydroxymethyltransferase (275 aa).

Residues Asp-51 and Asp-90 each coordinate Mg(2+). Residues 51–52 (DS), Asp-90, and Lys-120 each bind 3-methyl-2-oxobutanoate. A Mg(2+)-binding site is contributed by Glu-122. Catalysis depends on Glu-189, which acts as the Proton acceptor.

Belongs to the PanB family. In terms of assembly, homodecamer; pentamer of dimers. The cofactor is Mg(2+).

The protein localises to the cytoplasm. The enzyme catalyses 3-methyl-2-oxobutanoate + (6R)-5,10-methylene-5,6,7,8-tetrahydrofolate + H2O = 2-dehydropantoate + (6S)-5,6,7,8-tetrahydrofolate. The protein operates within cofactor biosynthesis; (R)-pantothenate biosynthesis; (R)-pantoate from 3-methyl-2-oxobutanoate: step 1/2. Its function is as follows. Catalyzes the reversible reaction in which hydroxymethyl group from 5,10-methylenetetrahydrofolate is transferred onto alpha-ketoisovalerate to form ketopantoate. This Caulobacter vibrioides (strain ATCC 19089 / CIP 103742 / CB 15) (Caulobacter crescentus) protein is 3-methyl-2-oxobutanoate hydroxymethyltransferase.